The sequence spans 323 residues: Protoheme IX farnesyltransferase (323 aa).

Transmembrane regions (helical) follow at residues 28–48 (IIPL…NGQV), 50–70 (PVLL…AQTL), 99–119 (HALI…VVFV), 122–142 (ASAL…THML), 150–170 (IVIG…AVTG), 178–198 (ALFA…ALMI), 223–243 (IWIY…PLAA), 244–264 (SGIV…YKTW), and 279–299 (LFKY…VDSL).

It belongs to the UbiA prenyltransferase family. Protoheme IX farnesyltransferase subfamily.

The protein resides in the cell inner membrane. The enzyme catalyses heme b + (2E,6E)-farnesyl diphosphate + H2O = Fe(II)-heme o + diphosphate. It functions in the pathway porphyrin-containing compound metabolism; heme O biosynthesis; heme O from protoheme: step 1/1. Its function is as follows. Converts heme B (protoheme IX) to heme O by substitution of the vinyl group on carbon 2 of heme B porphyrin ring with a hydroxyethyl farnesyl side group. In Gloeothece citriformis (strain PCC 7424) (Cyanothece sp. (strain PCC 7424)), this protein is Protoheme IX farnesyltransferase.